A 373-amino-acid polypeptide reads, in one-letter code: 3 beta-hydroxysteroid dehydrogenase/Delta 5--&gt;4-isomerase type 1 (373 aa).

NADP(+) is bound by residues 10–15 (GAGGFL), Y155, and K159. K159 (proton donor) is an active-site residue. A helical membrane pass occupies residues 288 to 308 (LALMYWIGFLLEVVSFLLSPV).

The protein belongs to the 3-beta-HSD family. Adrenal glands, testes and ovaries.

It localises to the endoplasmic reticulum membrane. It is found in the mitochondrion membrane. The catalysed reaction is a 3beta-hydroxy-Delta(5)-steroid + NAD(+) = a 3-oxo-Delta(5)-steroid + NADH + H(+). The enzyme catalyses pregnenolone + NAD(+) = pregn-5-ene-3,20-dione + NADH + H(+). It carries out the reaction 3beta-hydroxyandrost-5-en-17-one + NAD(+) = androst-5-ene-3,17-dione + NADH + H(+). It catalyses the reaction androst-5-en-3beta,17beta-diol + NAD(+) = 17beta-hydroxy-androst-5-en-3-one + NADH + H(+). The catalysed reaction is a 3beta-hydroxysteroid + NADP(+) = a 3-oxosteroid + NADPH + H(+). The enzyme catalyses 5alpha-androstane-3beta,17beta-diol + NADP(+) = 17beta-hydroxy-5alpha-androstan-3-one + NADPH + H(+). It carries out the reaction 3beta-hydroxy-5alpha-androstan-17-one + NADP(+) = 5alpha-androstan-3,17-dione + NADPH + H(+). It catalyses the reaction a 3-oxo-Delta(5)-steroid = a 3-oxo-Delta(4)-steroid. The catalysed reaction is pregn-5-ene-3,20-dione = progesterone. The enzyme catalyses androst-5-ene-3,17-dione = androst-4-ene-3,17-dione. It carries out the reaction 17beta-hydroxy-androst-5-en-3-one = testosterone. It catalyses the reaction 5alpha-androstane-3beta,17beta-diol + NAD(+) = 17beta-hydroxy-5alpha-androstan-3-one + NADH + H(+). It participates in steroid hormone biosynthesis. Its pathway is steroid metabolism. A bifunctional enzyme responsible for the oxidation and isomerization of 3beta-hydroxy-Delta(5)-steroid precursors to 3-oxo-Delta(4)-steroids, an essential step in steroid hormone biosynthesis. Specifically catalyzes the conversion of pregnenolone to progesterone, 17alpha-hydroxypregnenolone to 17alpha-hydroxyprogesterone, dehydroepiandrosterone (DHEA) to 4-androstenedione and androstenediol to testosterone. Additionally, catalyzes the interconversion between 3beta-hydroxy and 3-oxo-5alpha-androstane steroids controlling the bioavalability of the active forms. Specifically converts dihydrotestosterone to its inactive form 5alpha-androstanediol, that does not bind androgen receptor/AR. Also converts androstanedione, a precursor of testosterone and estrone, to epiandrosterone. Expected to use NAD(+) as preferred electron donor for the 3beta-hydroxy-steroid dehydrogenase activity and NADPH for the 3-ketosteroid reductase activity. This Macaca mulatta (Rhesus macaque) protein is 3 beta-hydroxysteroid dehydrogenase/Delta 5--&gt;4-isomerase type 1 (HSD3B1).